The primary structure comprises 759 residues: Protein zyg-11 homolog A (759 aa).

LRR repeat units lie at residues 204–227 (LPRL…LTCK), 235–260 (MHYL…CLLH), and 490–513 (VTSI…FMAV).

This sequence belongs to the zyg-11 family.

Functionally, probably acts as a target recruitment subunit in an E3 ubiquitin ligase complex ZYGA-CUL2-elongin BC. The chain is Protein zyg-11 homolog A (ZYG11A) from Homo sapiens (Human).